An 82-amino-acid polypeptide reads, in one-letter code: Small ribosomal subunit protein bS16 (82 aa).

Belongs to the bacterial ribosomal protein bS16 family.

The sequence is that of Small ribosomal subunit protein bS16 from Haemophilus ducreyi (strain 35000HP / ATCC 700724).